Here is a 357-residue protein sequence, read N- to C-terminus: UPF0324 membrane protein BMEI1914 (357 aa).

11 helical membrane-spanning segments follow: residues 29 to 48 (NILP…MVLE), 58 to 77 (AWLE…RSLA), 90 to 112 (SAKL…SAVI), 117 to 136 (GLIF…SYGI), 149 to 171 (LVAC…VIGA), 181 to 203 (AFTA…LLGL), 210 to 232 (ILAG…VSLL), 242 to 261 (LVRV…ISGN), 268 to 290 (PGFF…LHSL), 300 to 322 (AIQY…GVDI), and 334 to 356 (LTAI…MLGV).

It belongs to the UPF0324 family.

It is found in the cell membrane. The chain is UPF0324 membrane protein BMEI1914 from Brucella melitensis biotype 1 (strain ATCC 23456 / CCUG 17765 / NCTC 10094 / 16M).